A 717-amino-acid polypeptide reads, in one-letter code: DNA ligase (717 aa).

NAD(+)-binding positions include 41–45 (DARYD), 90–91 (SL), and glutamate 124. The active-site N6-AMP-lysine intermediate is lysine 126. The NAD(+) site is built by arginine 147, glutamate 183, lysine 299, and lysine 323. 4 residues coordinate Zn(2+): cysteine 428, cysteine 431, cysteine 446, and cysteine 452. One can recognise a BRCT domain in the interval 636-717 (ADYSPVAGKT…WLQLINEHHI (82 aa)).

The protein belongs to the NAD-dependent DNA ligase family. LigA subfamily. Mg(2+) is required as a cofactor. The cofactor is Mn(2+).

The catalysed reaction is NAD(+) + (deoxyribonucleotide)n-3'-hydroxyl + 5'-phospho-(deoxyribonucleotide)m = (deoxyribonucleotide)n+m + AMP + beta-nicotinamide D-nucleotide.. DNA ligase that catalyzes the formation of phosphodiester linkages between 5'-phosphoryl and 3'-hydroxyl groups in double-stranded DNA using NAD as a coenzyme and as the energy source for the reaction. It is essential for DNA replication and repair of damaged DNA. This Bartonella bacilliformis (strain ATCC 35685 / KC583 / Herrer 020/F12,63) protein is DNA ligase.